Reading from the N-terminus, the 218-residue chain is N-(5'-phosphoribosyl)anthranilate isomerase (218 aa).

Belongs to the TrpF family.

It catalyses the reaction N-(5-phospho-beta-D-ribosyl)anthranilate = 1-(2-carboxyphenylamino)-1-deoxy-D-ribulose 5-phosphate. It functions in the pathway amino-acid biosynthesis; L-tryptophan biosynthesis; L-tryptophan from chorismate: step 3/5. This chain is N-(5'-phosphoribosyl)anthranilate isomerase, found in Stenotrophomonas maltophilia (strain R551-3).